The following is a 191-amino-acid chain: Ion-translocating oxidoreductase complex subunit B (191 aa).

Residues 1 to 26 (MSAVLIAVLALLALCLLGGAILGFAA) are hydrophobic. Positions 32–90 (EGDPIAEQINALLPQTQCGQCGYPGCKPYAEAIAGGDKINKCPPGGEATIQALADLLDV) constitute a 4Fe-4S domain. [4Fe-4S] cluster contacts are provided by C49, C52, C57, C73, C114, C117, C120, C124, C144, C147, C150, and C154. 4Fe-4S ferredoxin-type domains follow at residues 105–134 (MVAY…GAAR) and 135–164 (QMHT…MIEV).

Belongs to the 4Fe4S bacterial-type ferredoxin family. RnfB subfamily. As to quaternary structure, the complex is composed of six subunits: RnfA, RnfB, RnfC, RnfD, RnfE and RnfG. [4Fe-4S] cluster serves as cofactor.

Its subcellular location is the cell inner membrane. In terms of biological role, part of a membrane-bound complex that couples electron transfer with translocation of ions across the membrane. This is Ion-translocating oxidoreductase complex subunit B from Stutzerimonas stutzeri (strain A1501) (Pseudomonas stutzeri).